The following is an 864-amino-acid chain: N-alpha-acetyltransferase 16, NatA auxiliary subunit (864 aa).

TPR repeat units follow at residues 46–79, 80–113, 148–184, 224–257, 374–407, 409–441, and 485–518; these read GETLAMKGLTLNCLGKKEEAYEFVRKGLRNDVKS, HVCWHVYGLLQRSDKKYDEAIKCYRNALKLDKDN, RASWIGYAIAYHLLKDYDMALKLLEEFRQTQQVPPNK, LLVEEIKGEILLKLGRLKEASEVFKNLIDRNAEN, LWVQYFLAQHFDKLGQYSLALDYINAAIASTPTL, ELFYMKAKIYKHIGNLKEAAKWMDEAQSLDTAD, and MWFQTECISAYQRLGRYGDALKKCHEVERHFFEI. The segment at 603–638 is disordered; that stretch reads QKKAKLEEERKHAERERQQKNQKKKRDEEEEEASGL. Positions 606–621 are enriched in basic and acidic residues; the sequence is AKLEEERKHAERERQQ.

Component of the N-terminal acetyltransferase A (NatA) complex composed of NAA10 and NAA16.

Auxillary subunit of the N-terminal acetyltransferase A (NatA) complex which displays alpha (N-terminal) acetyltransferase activity. The sequence is that of N-alpha-acetyltransferase 16, NatA auxiliary subunit (NAA16) from Homo sapiens (Human).